We begin with the raw amino-acid sequence, 363 residues long: Adenosine deaminase (363 aa).

At alanine 2 the chain carries N-acetylalanine. 2 residues coordinate Zn(2+): histidine 15 and histidine 17. 2 residues coordinate substrate: histidine 17 and aspartate 19. An N6-acetyllysine modification is found at lysine 54. Substrate is bound at residue glycine 184. A Zn(2+)-binding site is contributed by histidine 214. The Proton donor role is filled by glutamate 217. Lysine 232 is modified (N6-acetyllysine). Residue aspartate 295 coordinates Zn(2+). Aspartate 296 is a substrate binding site.

The protein belongs to the metallo-dependent hydrolases superfamily. Adenosine and AMP deaminases family. Interacts with DPP4 (via extracellular domain). Interacts with PLG (via Kringle 4 domain); the interaction stimulates PLG activation when in complex with DPP4. Zn(2+) serves as cofactor. Expressed in gastrointestinal tissues (at protein level).

The protein localises to the cell membrane. It localises to the cell junction. It is found in the cytoplasmic vesicle lumen. The protein resides in the cytoplasm. Its subcellular location is the lysosome. The enzyme catalyses adenosine + H2O + H(+) = inosine + NH4(+). It catalyses the reaction 2'-deoxyadenosine + H2O + H(+) = 2'-deoxyinosine + NH4(+). It carries out the reaction cordycepin + H2O + H(+) = 3'-deoxyinosine + NH4(+). Catalyzes the hydrolytic deamination of adenosine and 2-deoxyadenosine. Plays an important role in purine metabolism and in adenosine homeostasis. Modulates signaling by extracellular adenosine, and so contributes indirectly to cellular signaling events. Acts as a positive regulator of T-cell coactivation, by binding DPP4. Its interaction with DPP4 regulates lymphocyte-epithelial cell adhesion. Enhances dendritic cell immunogenicity by affecting dendritic cell costimulatory molecule expression and cytokines and chemokines secretion. Enhances CD4+ T-cell differentiation and proliferation. Acts as a positive modulator of adenosine receptors ADORA1 and ADORA2A, by enhancing their ligand affinity via conformational change. Stimulates plasminogen activation. Plays a role in male fertility. Plays a protective role in early postimplantation embryonic development. Also responsible for the deamination of cordycepin (3'-deoxyadenosine), a fungal natural product that shows antitumor, antibacterial, antifungal, antivirus, and immune regulation properties. The sequence is that of Adenosine deaminase (ADA) from Bos taurus (Bovine).